The sequence spans 445 residues: Phosphoglucosamine mutase (445 aa).

Serine 99 functions as the Phosphoserine intermediate in the catalytic mechanism. Serine 99, aspartate 242, aspartate 244, and aspartate 246 together coordinate Mg(2+). Serine 99 is modified (phosphoserine).

It belongs to the phosphohexose mutase family. Mg(2+) serves as cofactor. Post-translationally, activated by phosphorylation.

The enzyme catalyses alpha-D-glucosamine 1-phosphate = D-glucosamine 6-phosphate. Functionally, catalyzes the conversion of glucosamine-6-phosphate to glucosamine-1-phosphate. The protein is Phosphoglucosamine mutase of Campylobacter jejuni subsp. jejuni serotype O:2 (strain ATCC 700819 / NCTC 11168).